Consider the following 689-residue polypeptide: MARPPLDQVRTIGIISHIDAGKTTVSERILFYTGETHKMGEVHDGEAVMDWMPQEQERGITITSTATVCTWRNHRLNLVDTPGHIDFTIEVERSLRVLDGAVTIFSAVEGVQPQSESVWRQADRYGVPRICFINKMDRVGADLRGTLRQMEEKLKARPVLLQLPVGEETGFRGVIDLLAEELITFADGDQGRTVSRGPVPADLLDAAREGRDAVAEAAADFDDAILADLLEGKDITAARLRGALRLGVLACRIFPVLLGSALRNKGIQPLLDAVVDFLPSPLDVPPAKGKRPGSETVDELPCDPGGPFCALAFKVQSEDGRKLTYLRVYSGTIKAGGAVWNSSRGCFEKLARLFRMHAHKREQIEEAAAGDIVAAAGLKEVLTGDTLCDPAHRIVLEGLAVPEPVVSLAVEARGVDDRDKLLPALEKLQWEDPTFRVHEDEETGQTILTGMGELHLEVVVDRLQREFGVGVKTGRPQVVYRETITRAVERREIFRAEHEGKVQGGEVLLQLSPLPRGAGVRVNVPDAAELGIGKELRDAVADSIGRACSAGARTGYPLTDLEVRVAAIPVEPGVTTDAGVRAAAGRGLMLAARDAGPTLLEPVMNLEIVIPADYAGKVLGSVQQKRGRIEGISSQGDTETIRASVPLAEMFGYMTELRSATKGRGTYTMEFSHYDRAPIEVLRRFGLEA.

The tr-type G domain occupies 7–282 (DQVRTIGIIS…AVVDFLPSPL (276 aa)). GTP-binding positions include 16 to 23 (SHIDAGKT), 80 to 84 (DTPGH), and 134 to 137 (NKMD).

The protein belongs to the TRAFAC class translation factor GTPase superfamily. Classic translation factor GTPase family. EF-G/EF-2 subfamily.

The protein localises to the cytoplasm. Functionally, catalyzes the GTP-dependent ribosomal translocation step during translation elongation. During this step, the ribosome changes from the pre-translocational (PRE) to the post-translocational (POST) state as the newly formed A-site-bound peptidyl-tRNA and P-site-bound deacylated tRNA move to the P and E sites, respectively. Catalyzes the coordinated movement of the two tRNA molecules, the mRNA and conformational changes in the ribosome. In Geobacter sulfurreducens (strain ATCC 51573 / DSM 12127 / PCA), this protein is Elongation factor G 1.